The following is a 322-amino-acid chain: uncharacterized protein (322 aa).

Basic residues-rich tracts occupy residues 1–16 (MPGNSRRRGAVRKSGT) and 43–61 (LRPHHPAAKRARAQPRRPV). The disordered stretch occupies residues 1 to 69 (MPGNSRRRGA…PVKRADETET (69 aa)). Positions 261, 281, and 290 each coordinate S-adenosyl-L-methionine.

The protein belongs to the class IV-like SAM-binding methyltransferase superfamily. RNA methyltransferase TrmH family.

This is an uncharacterized protein from Mycobacterium bovis (strain ATCC BAA-935 / AF2122/97).